The chain runs to 420 residues: Serine hydroxymethyltransferase (420 aa).

Residues Leu-118 and Gly-122–Leu-124 contribute to the (6S)-5,6,7,8-tetrahydrofolate site. N6-(pyridoxal phosphate)lysine is present on Lys-227.

It belongs to the SHMT family. Homodimer. Requires pyridoxal 5'-phosphate as cofactor.

It localises to the cytoplasm. It carries out the reaction (6R)-5,10-methylene-5,6,7,8-tetrahydrofolate + glycine + H2O = (6S)-5,6,7,8-tetrahydrofolate + L-serine. It functions in the pathway one-carbon metabolism; tetrahydrofolate interconversion. Its pathway is amino-acid biosynthesis; glycine biosynthesis; glycine from L-serine: step 1/1. Its function is as follows. Catalyzes the reversible interconversion of serine and glycine with tetrahydrofolate (THF) serving as the one-carbon carrier. This reaction serves as the major source of one-carbon groups required for the biosynthesis of purines, thymidylate, methionine, and other important biomolecules. Also exhibits THF-independent aldolase activity toward beta-hydroxyamino acids, producing glycine and aldehydes, via a retro-aldol mechanism. This Persephonella marina (strain DSM 14350 / EX-H1) protein is Serine hydroxymethyltransferase.